The following is a 329-amino-acid chain: Mas-related G-protein coupled receptor member X2 (329 aa).

Over 1–33 the chain is Extracellular; it reads MDPTTPAWGTESTTMNGNDQALPLLCGKETMIS. A helical membrane pass occupies residues 34–54; the sequence is VFLILFIALVGLVGNAFVLWL. At 55 to 63 the chain is on the cytoplasmic side; the sequence is LGFRMRRNA. A helical membrane pass occupies residues 64–84; it reads FSVYVLSLAGADFLFLCFQMT. Over 85 to 96 the chain is Extracellular; it reads SCLAYLINFFGS. Residues 97–116 form a helical membrane-spanning segment; the sequence is ISINIPSFFTVMTCAYLAGL. The Cytoplasmic segment spans residues 117–143; that stretch reads SMLSAISTERCLSVLWPIWYRCRRPRH. The helical transmembrane segment at 144-164 threads the bilayer; sequence LSAVMCVLLWALSLLLSILEG. Residues 165-183 lie on the Extracellular side of the membrane; sequence KFCGFLFSDDDPGWCQTFD. The chain crosses the membrane as a helical span at residues 184–204; that stretch reads FITAAWLMFLFVVLCGSSLAL. Residues 205–227 are Cytoplasmic-facing; that stretch reads LVRILCGSRSLPLTRLYLTILLT. Residues 228–248 traverse the membrane as a helical segment; it reads VLIFLLCGLPFGIQWFLILWI. Over 249-263 the chain is Extracellular; sequence WKNSVVLFCHIHPIS. The chain crosses the membrane as a helical span at residues 264–284; that stretch reads VVLSSFNSSANPIIYFFVGSF. Residues 285–329 are Cytoplasmic-facing; it reads RKQWRLRQPILKLALQRALQDTAEVDHSEGCFSQGTLEMSRSSLV.

The protein belongs to the G-protein coupled receptor 1 family. Mas subfamily.

The protein resides in the cell membrane. Its function is as follows. Mast cell-specific receptor for basic secretagogues, i.e. cationic amphiphilic drugs, as well as endo- or exogenous peptides, consisting of a basic head group and a hydrophobic core. Recognizes and binds small molecules containing a cyclized tetrahydroisoquinoline (THIQ), such as non-steroidal neuromuscular blocking drugs (NMBDs), including tubocurarine and atracurium. In response to these compounds, mediates pseudo-allergic reactions characterized by histamine release, inflammation and airway contraction. This Macaca mulatta (Rhesus macaque) protein is Mas-related G-protein coupled receptor member X2 (MRGPRX2).